We begin with the raw amino-acid sequence, 419 residues long: uncharacterized protein (419 aa).

The region spanning 29 to 236 (PKFQDKIRIR…KLIELELKTI (208 aa)) is the Obg domain. The 178-residue stretch at 237–414 (CEIGLVGLPN…LVRGMTQLLQ (178 aa)) folds into the OBG-type G domain. GTP contacts are provided by residues 243–250 (GLPNAGKS), 295–299 (DIPGI), and 364–367 (ANKA).

It belongs to the TRAFAC class OBG-HflX-like GTPase superfamily. OBG GTPase family.

Its subcellular location is the mitochondrion. This is an uncharacterized protein from Schizosaccharomyces pombe (strain 972 / ATCC 24843) (Fission yeast).